The following is a 436-amino-acid chain: Xylose isomerase (436 aa).

Residues H100 and D103 contribute to the active site. The Mg(2+) site is built by E231, E267, H270, D295, D306, D308, and D338.

The protein belongs to the xylose isomerase family. Homotetramer. Mg(2+) is required as a cofactor.

The protein localises to the cytoplasm. The enzyme catalyses alpha-D-xylose = alpha-D-xylulofuranose. The chain is Xylose isomerase from Rhizobium etli (strain ATCC 51251 / DSM 11541 / JCM 21823 / NBRC 15573 / CFN 42).